The following is a 443-amino-acid chain: ATP-dependent protease ATPase subunit HslU (443 aa).

ATP is bound by residues Ile-18, 60-65 (GVGKTE), Asp-256, Glu-321, and Arg-393.

This sequence belongs to the ClpX chaperone family. HslU subfamily. As to quaternary structure, a double ring-shaped homohexamer of HslV is capped on each side by a ring-shaped HslU homohexamer. The assembly of the HslU/HslV complex is dependent on binding of ATP.

It localises to the cytoplasm. ATPase subunit of a proteasome-like degradation complex; this subunit has chaperone activity. The binding of ATP and its subsequent hydrolysis by HslU are essential for unfolding of protein substrates subsequently hydrolyzed by HslV. HslU recognizes the N-terminal part of its protein substrates and unfolds these before they are guided to HslV for hydrolysis. In Vibrio parahaemolyticus serotype O3:K6 (strain RIMD 2210633), this protein is ATP-dependent protease ATPase subunit HslU.